The chain runs to 33 residues: Antimicrobial peptide MBP-1 (33 aa).

Predominantly in the embryo portion of the kernel.

The protein localises to the secreted. Inhibitor of both bacterial and fungal growth in vitro. The protein is Antimicrobial peptide MBP-1 of Zea mays (Maize).